The primary structure comprises 86 residues: BaSO(4)-adsorbing protein 1 (86 aa).

3 disulfide bridges follow: cysteine 6-cysteine 22, cysteine 18-cysteine 49, and cysteine 39-cysteine 54. The segment at 58–86 is disordered; it reads GDSASNTQNQGGSRRQENEDQGDDEWDRK. Over residues 59-70 the composition is skewed to polar residues; it reads DSASNTQNQGGS. The segment covering 76 to 86 has biased composition (acidic residues); the sequence is EDQGDDEWDRK.

As to expression, salivary gland (at protein level).

It localises to the secreted. In terms of biological role, inhibits lectin and classical pathways of complement system activation in the host with no significant effect on the alternative pathway. Inhibits host extrinsic blood coagulation pathway but not the intrinsic cascade. Binds to neutral and negatively charged membranes in vitro; binding is reduced upon pre-incubation with Ca(2+). The sequence is that of BaSO(4)-adsorbing protein 1 from Ornithodoros savignyi (African eyed tampan).